Reading from the N-terminus, the 631-residue chain is KIF-binding protein (631 aa).

A compositionally biased stretch (acidic residues) spans 60 to 70; it reads EQGEAGDEADC. Residues 60 to 88 form a disordered region; it reads EQGEAGDEADCESSQTADGEPEDGFEKTF.

The protein belongs to the KIF-binding protein family. As to expression, at 30 hpf, primarily expressed in central and peripheral neurons.

It is found in the cytoplasm. The protein resides in the cytoskeleton. In terms of biological role, activator of KIF1B plus-end-directed microtubule motor activity. Required for organization of axonal microtubules, and axonal outgrowth and maintenance during peripheral and central nervous system development. This chain is KIF-binding protein (kifbp), found in Danio rerio (Zebrafish).